The following is a 2453-amino-acid chain: Tyrosine-protein phosphatase non-receptor type 13 (2453 aa).

Residues 3–190 enclose the KIND domain; the sequence is VSLAEALEVR…SGTDPLSRSS (188 aa). The interval 183–227 is disordered; that stretch reads TDPLSRSSEQKPDRSQAIRDRLRGKGLPTGRSSTSDALDTHEAPL. Positions 190 to 205 are enriched in basic and acidic residues; the sequence is SEQKPDRSQAIRDRLR. Ser240 is subject to Phosphoserine. Positions 253-285 are disordered; that stretch reads EDYLKDTPSDNNSRHEDSETFSSPYQFKTSTPQ. Basic and acidic residues predominate over residues 256-270; that stretch reads LKDTPSDNNSRHEDS. Positions 272–285 are enriched in polar residues; it reads TFSSPYQFKTSTPQ. Phosphoserine is present on residues Ser297 and Ser298. Residues 429-457 are disordered; that stretch reads SEASKRFESSSGLPGVDETGQTRPSRQYE. Over residues 447–457 the composition is skewed to polar residues; the sequence is TGQTRPSRQYE. Residues 458-493 adopt a coiled-coil conformation; sequence TSLEGNLINQDIMLRRQEEEMMQLQARMALRQSRLS. The FERM domain occupies 565–865; sequence RKVNIRLLSG…SQHKFQLQMR (301 aa). A phosphoserine mark is found at Ser883, Ser890, Ser901, Ser904, and Ser907. A compositionally biased stretch (basic and acidic residues) spans 944-957; it reads KEKTDKASWEEKPR. 2 disordered regions span residues 944 to 966 and 1007 to 1063; these read KEKT…YHDL and LAGL…VPFK. A phosphoserine mark is found at Ser1021 and Ser1025. The span at 1025–1034 shows a compositional bias: basic and acidic residues; the sequence is SPERRNHESD. Residues 1049–1058 show a composition bias toward low complexity; it reads SLPSSGKSSS. Ser1076 is subject to Phosphoserine. The PDZ 1 domain maps to 1084–1170; it reads LVNLKKDPKH…DVTLVISQPK (87 aa). Disordered regions lie at residues 1199–1356 and 1441–1478; these read DSAM…GDTF and GQVP…TPHV. Ser1221 carries the phosphoserine modification. Polar residues-rich tracts occupy residues 1242-1252 and 1267-1279; these read ESASLSQSQVN and PQHS…VTTK. The residue at position 1270 (Ser1270) is a Phosphoserine. A compositionally biased stretch (basic and acidic residues) spans 1297–1315; sequence GISDLIEHLDCADSDKDDS. Low complexity predominate over residues 1331–1341; the sequence is SSSLSTSNKTS. One can recognise a PDZ 2 domain in the interval 1357-1442; that stretch reads EVELAKTDGS…VVHLLLEKGQ (86 aa). Over residues 1467 to 1478 the composition is skewed to basic and acidic residues; it reads APEKVAKQTPHV. The PDZ 3 domain maps to 1491–1579; that stretch reads EVKLFKNSSG…EVSLLLCRPA (89 aa). The segment covering 1602–1629 has biased composition (polar residues); that stretch reads LNSSKETSQPSSSVEQGASSDDNGVSGK. Disordered stretches follow at residues 1602–1662 and 1695–1726; these read LNSS…AKMP and KLES…SDAT. Positions 1638-1655 are enriched in basic and acidic residues; the sequence is SRRESYSDHSESGEDDSV. PDZ domains follow at residues 1764 to 1845 and 1857 to 1942; these read LITL…GRIL and LPDI…TRDG. 2 disordered regions span residues 1991-2024 and 2051-2139; these read EAVC…DDIY and RHAT…DPPF. The segment covering 2012 to 2021 has biased composition (basic and acidic residues); that stretch reads ETKESNSRDD. Residues 2180–2434 enclose the Tyrosine-protein phosphatase domain; sequence PSKELENLQE…VFCYQVILYV (255 aa). Substrate is bound by residues Asp2345, 2375 to 2381, and Gln2419; that span reads CSAGIGR. Cys2375 (phosphocysteine intermediate) is an active-site residue.

It belongs to the protein-tyrosine phosphatase family. Non-receptor class subfamily. In terms of assembly, interacts (via the first PDZ domain) with PLEKHA1 and PLEKHA2. Interacts (via the second PDZ domain) with TNFRSF6 (Fas receptor) (via C-terminus). Interacts (via the second PDZ domain) with TRIP6 (via the third LIM domain and C-terminus). Interacts (via the third PDZ domain) with NGFR (via C-terminal SVP motif) and PKN2 (via C-terminus). Interacts (via the second or fourth PDZ domains) with PDLIM4 (via C-terminus only or via combined C-terminus and LIM domain, but not LIM domain only). Found in a complex with PDLIM4 and TRIP6. Interacts with PDLIM4; this interaction results in dephosphorylation of SRC 'Tyr-419' by this protein leading to its inactivation. Interacts with BRD7. Interacts with RAPGEF6. Interacts with ARHGAP29. Interacts with PIK3R2; dephosphorylates PIK3R2. Interacts with FBXL2. Interacts (via the FERM domain) with ENTR1. Found in a complex with ENTR1, PTPN13 and GIT1. As to expression, expressed predominantly in kidney and, to a lesser extent, in lung, heart, brain and testis.

The protein resides in the cytoplasm. The protein localises to the cytoskeleton. It localises to the nucleus. It is found in the cell projection. Its subcellular location is the lamellipodium. The enzyme catalyses O-phospho-L-tyrosyl-[protein] + H2O = L-tyrosyl-[protein] + phosphate. Its function is as follows. Tyrosine phosphatase which negatively regulates FAS-induced apoptosis and NGFR-mediated pro-apoptotic signaling. May regulate phosphoinositide 3-kinase (PI3K) signaling through dephosphorylation of PIK3R2. The protein is Tyrosine-protein phosphatase non-receptor type 13 (Ptpn13) of Mus musculus (Mouse).